Here is a 212-residue protein sequence, read N- to C-terminus: Pyridoxine/pyridoxamine 5'-phosphate oxidase (212 aa).

Substrate-binding positions include 7–10 (RAKY) and Lys-65. FMN contacts are provided by residues 60–65 (RTVLLK), 75–76 (FT), Lys-82, and Gln-104. Substrate contacts are provided by Tyr-122, Arg-126, and Ser-130. FMN is bound by residues 139–140 (QS) and Trp-184. 190 to 192 (RLH) contacts substrate. Arg-194 serves as a coordination point for FMN.

This sequence belongs to the pyridoxamine 5'-phosphate oxidase family. As to quaternary structure, homodimer. It depends on FMN as a cofactor.

The catalysed reaction is pyridoxamine 5'-phosphate + O2 + H2O = pyridoxal 5'-phosphate + H2O2 + NH4(+). The enzyme catalyses pyridoxine 5'-phosphate + O2 = pyridoxal 5'-phosphate + H2O2. It participates in cofactor metabolism; pyridoxal 5'-phosphate salvage; pyridoxal 5'-phosphate from pyridoxamine 5'-phosphate: step 1/1. It functions in the pathway cofactor metabolism; pyridoxal 5'-phosphate salvage; pyridoxal 5'-phosphate from pyridoxine 5'-phosphate: step 1/1. Functionally, catalyzes the oxidation of either pyridoxine 5'-phosphate (PNP) or pyridoxamine 5'-phosphate (PMP) into pyridoxal 5'-phosphate (PLP). This Aliarcobacter butzleri (strain RM4018) (Arcobacter butzleri) protein is Pyridoxine/pyridoxamine 5'-phosphate oxidase.